The sequence spans 270 residues: Putative pyruvate, phosphate dikinase regulatory protein (270 aa).

151 to 158 contacts ADP; sequence GVSRTSKT.

This sequence belongs to the pyruvate, phosphate/water dikinase regulatory protein family. PDRP subfamily.

The enzyme catalyses N(tele)-phospho-L-histidyl/L-threonyl-[pyruvate, phosphate dikinase] + ADP = N(tele)-phospho-L-histidyl/O-phospho-L-threonyl-[pyruvate, phosphate dikinase] + AMP + H(+). It catalyses the reaction N(tele)-phospho-L-histidyl/O-phospho-L-threonyl-[pyruvate, phosphate dikinase] + phosphate + H(+) = N(tele)-phospho-L-histidyl/L-threonyl-[pyruvate, phosphate dikinase] + diphosphate. Its function is as follows. Bifunctional serine/threonine kinase and phosphorylase involved in the regulation of the pyruvate, phosphate dikinase (PPDK) by catalyzing its phosphorylation/dephosphorylation. The protein is Putative pyruvate, phosphate dikinase regulatory protein (yqfL) of Bacillus subtilis (strain 168).